An 818-amino-acid chain; its full sequence is Protein LDB19 (818 aa).

The interval 1–25 is disordered; that stretch reads MAFSRLTSTHQSNHNGYSNSNKKGQ. Position 93 is a phosphothreonine (Thr-93). A compositionally biased stretch (basic and acidic residues) spans 352-361; sequence QVKIKESEKS. The disordered stretch occupies residues 352-374; sequence QVKIKESEKSKKPRSHIKRYGEL. A Phosphoserine modification is found at Ser-384. The tract at residues 388-436 is disordered; sequence MPSQRLPGEPGREQAPNSSGPASTGNVGLDDENPVNEDEEDQPGSEFIH. A compositionally biased stretch (polar residues) spans 402 to 413; sequence APNSSGPASTGN. Residues 416–430 show a composition bias toward acidic residues; sequence LDDENPVNEDEEDQP. Residue Lys-486 forms a Glycyl lysine isopeptide (Lys-Gly) (interchain with G-Cter in ubiquitin) linkage. Disordered regions lie at residues 568 to 590 and 607 to 644; these read QPIR…NVHN and TPKV…NSNI. Thr-619 carries the post-translational modification Phosphothreonine. A compositionally biased stretch (polar residues) spans 620–629; that stretch reads PVNSNKSNHS. Ser-808 carries the phosphoserine modification.

It belongs to the LDB19 family.

It is found in the cytoplasm. It localises to the golgi apparatus. May be involved in protein-linked oligosaccharide phosphorylation since the deletion reduces the negative charge of the cell surface. Involved in the resistance to EDTA, cadmium chloride, cycloheximide, 6-dimethylaminopurine, methyl caffeate, beta-chloro-L-alanine, caffeine and cerulenin. The chain is Protein LDB19 (LDB19) from Saccharomyces cerevisiae (strain ATCC 204508 / S288c) (Baker's yeast).